Here is a 348-residue protein sequence, read N- to C-terminus: Nuclear receptor subfamily 1 group I member 3 (348 aa).

The segment at residues 8 to 83 (LRNCVVCGDQ…AGMRKDMILS (76 aa)) is a DNA-binding region (nuclear receptor). An NR C4-type zinc finger spans residues 11–31 (CVVCGDQATGYHFNALTCEGC). Position 38 is a phosphothreonine; by PKC (threonine 38). An NR C4-type zinc finger spans residues 47 to 71 (CPFAGSCEVSKTQRRHCPACRLQKC). The NR LBD domain maps to 109–348 (EQEELIRTLL…MMPLLQEICS (240 aa)).

Belongs to the nuclear hormone receptor family. NR1 subfamily. In terms of assembly, heterodimer of NR1I3 and RXR. Interacts with PSMC4. Interacts with ECT2. Directly interacts with DNAJC7; this complex may also include HSP90. Interacts with CRY1. Interacts with CRY2 in a ligand-dependent manner. In terms of processing, phosphorylated at Thr-38 by PKC, dephosphorylation of Thr-38 is required for nuclear translocation and activation.

Its subcellular location is the nucleus. The protein resides in the cytoplasm. It is found in the cytoskeleton. Functionally, binds and transactivates the retinoic acid response elements that control expression of the retinoic acid receptor beta 2 and alcohol dehydrogenase 3 genes. Transactivates both the phenobarbital responsive element module of the human CYP2B6 gene and the CYP3A4 xenobiotic response element. This chain is Nuclear receptor subfamily 1 group I member 3 (NR1I3), found in Pan troglodytes (Chimpanzee).